The primary structure comprises 456 residues: RuvB-like 1 (456 aa).

Lys-2 participates in a covalent cross-link: Glycyl lysine isopeptide (Lys-Gly) (interchain with G-Cter in SUMO2). Residue 70–77 (GPPGTGKT) coordinates ATP. Lys-225 is covalently cross-linked (Glycyl lysine isopeptide (Lys-Gly) (interchain with G-Cter in SUMO1); alternate). Residue Lys-225 forms a Glycyl lysine isopeptide (Lys-Gly) (interchain with G-Cter in SUMO2); alternate linkage. Lys-445 is covalently cross-linked (Glycyl lysine isopeptide (Lys-Gly) (interchain with G-Cter in SUMO2)). Lys-453 is modified (N6-acetyllysine).

Belongs to the RuvB family. As to quaternary structure, forms homohexameric rings. Can form a dodecamer with RUVBL2 made of two stacked hexameric rings; however, even though RUVBL1 and RUVBL2 are present in equimolar ratio, the oligomeric status of each hexamer is not known. Oligomerization may regulate binding to nucleic acids and conversely, binding to nucleic acids may affect the dodecameric assembly. Interaction of the complex with DHX34 results in conformational changes of the N-terminus of the RUVBL2 subunits, resulting in loss of nucleotide binding ability and ATP hydrolysis of the complex. Interacts with the transcriptional activation domain of MYC. Component of the RNA polymerase II holoenzyme complex. May also act to bridge the LEF1/TCF1-CTNNB1 complex and TBP. Component of the NuA4 histone acetyltransferase complex which contains the catalytic subunit KAT5/TIP60 and the subunits EP400, TRRAP/PAF400, BRD8/SMAP, EPC1, DMAP1/DNMAP1, RUVBL1/TIP49, RUVBL2, ING3, actin, ACTL6A/BAF53A, MORF4L1/MRG15, MORF4L2/MRGX, MRGBP, YEATS4/GAS41, VPS72/YL1 and MEAF6. The NuA4 complex interacts with MYC and the adenovirus E1A protein. RUVBL1 interacts with EP400. Component of a NuA4-related complex which contains EP400, TRRAP/PAF400, SRCAP, BRD8/SMAP, EPC1, DMAP1/DNMAP1, RUVBL1/TIP49, RUVBL2, actin, ACTL6A/BAF53A, VPS72 and YEATS4/GAS41. Component of the BAF53 complex, at least composed of ACTL6A/BAF53A, RUVBL1/TIP49, SMARCA2/BRM, and TRRAP/PAF400. Component of some MLL1/MLL complex, at least composed of the core components KMT2A/MLL1, ASH2L, HCFC1/HCF1, WDR5 and RBBP5, as well as the facultative components BACC1, CHD8, E2F6, HSP70, INO80C, KANSL1, LAS1L, MAX, MCRS1, MGA, MYST1/MOF, PELP1, PHF20, PRP31, RING2, RUVB1/TIP49A, RUVB2/TIP49B, SENP3, TAF1, TAF4, TAF6, TAF7, TAF9 and TEX10. Associates with alpha and gamma tubulins, particularly during metaphase and early anaphase. Interacts with NPAT. Component of the chromatin-remodeling INO80 complex; specifically part of a complex module associated with the helicase ATP-binding and the helicase C-terminal domain of INO80. Interacts with IGHMBP2. Interacts with OFD1. Interacts with HINT1. Component of a complex with USP49 and PSMC5. Component of a SWR1-like complex. Component of the R2TP complex composed at least of RUVBL1, RUVBL2, RPAP3 and PIHD1. Component of the PAQosome complex which is responsible for the biogenesis of several protein complexes and which consists of R2TP complex members RUVBL1, RUVBL2, RPAP3 and PIH1D1, URI complex members PFDN2, PFDN6, PDRG1, UXT and URI1 as well as ASDURF, POLR2E and DNAAF10/WDR92. Interacts with PIH1D1. Interacts with ITFG1. Interacts with WAC; WAC positively regulates MTOR activity by promoting the assembly of the TTT complex composed of TELO2, TTI1 and TTI2 and the RUVBL complex composed of RUVBL1 and RUVBL2 into the TTT-RUVBL complex which leads to the dimerization of the mTORC1 complex and its subsequent activation. The RUVBL1/RUVBL2 complex interacts with ZNHIT1 (via HIT-type zinc finger), ZNHIT3 (via HIT-type zinc finger), ZNHIT6 (via HIT-type zinc finger) and DDX59/ZNHIT5 (via HIT-type zinc finger) in the presence of ADP. Interacts with NOPCHAP1; the interaction is direct and disrupted upon ATP binding. Interacts with SMG1. Interacts with NOP2, NOP56 and NUFIP1.

The protein localises to the nucleus matrix. It is found in the nucleus. It localises to the nucleoplasm. The protein resides in the cytoplasm. Its subcellular location is the membrane. The protein localises to the cytoskeleton. It is found in the microtubule organizing center. It localises to the centrosome. The protein resides in the dynein axonemal particle. It catalyses the reaction ATP + H2O = ADP + phosphate + H(+). In terms of biological role, possesses single-stranded DNA-stimulated ATPase and ATP-dependent DNA helicase (3' to 5') activity; hexamerization is thought to be critical for ATP hydrolysis and adjacent subunits in the ring-like structure contribute to the ATPase activity. Component of the NuA4 histone acetyltransferase complex which is involved in transcriptional activation of select genes principally by acetylation of nucleosomal histones H4 and H2A. This modification may both alter nucleosome-DNA interactions and promote interaction of the modified histones with other proteins which positively regulate transcription. This complex may be required for the activation of transcriptional programs associated with oncogene and proto-oncogene mediated growth induction, tumor suppressor mediated growth arrest and replicative senescence, apoptosis, and DNA repair. The NuA4 complex ATPase and helicase activities seem to be, at least in part, contributed by the association of RUVBL1 and RUVBL2 with EP400. NuA4 may also play a direct role in DNA repair when recruited to sites of DNA damage. Component of a SWR1-like complex that specifically mediates the removal of histone H2A.Z/H2AZ1 from the nucleosome. Proposed core component of the chromatin remodeling INO80 complex which exhibits DNA- and nucleosome-activated ATPase activity and catalyzes ATP-dependent nucleosome sliding. Plays an essential role in oncogenic transformation by MYC and also modulates transcriptional activation by the LEF1/TCF1-CTNNB1 complex. Essential for cell proliferation. May be able to bind plasminogen at cell surface and enhance plasminogen activation. The polypeptide is RuvB-like 1 (Ruvbl1) (Mus musculus (Mouse)).